Consider the following 328-residue polypeptide: Phenylalanine--tRNA ligase alpha subunit (328 aa).

Residue Glu253 coordinates Mg(2+).

It belongs to the class-II aminoacyl-tRNA synthetase family. Phe-tRNA synthetase alpha subunit type 1 subfamily. As to quaternary structure, tetramer of two alpha and two beta subunits. Requires Mg(2+) as cofactor.

The protein localises to the cytoplasm. It catalyses the reaction tRNA(Phe) + L-phenylalanine + ATP = L-phenylalanyl-tRNA(Phe) + AMP + diphosphate + H(+). This Actinobacillus pleuropneumoniae serotype 7 (strain AP76) protein is Phenylalanine--tRNA ligase alpha subunit.